A 112-amino-acid chain; its full sequence is UPF0375 protein R05A10.4 (112 aa).

A signal peptide spans Met1–Ala19. Asn59 is a glycosylation site (N-linked (GlcNAc...) asparagine).

Belongs to the UPF0375 family.

The protein resides in the secreted. This Caenorhabditis elegans protein is UPF0375 protein R05A10.4.